The following is a 99-amino-acid chain: uncharacterized protein (99 aa).

This is an uncharacterized protein from Salmonella typhimurium (strain LT2 / SGSC1412 / ATCC 700720).